Reading from the N-terminus, the 445-residue chain is Eukaryotic translation initiation factor 3 subunit E (445 aa).

The 174-residue stretch at 230–403 (FFNHVKGRDL…GHVVMGAQPL (174 aa)) folds into the PCI domain.

This sequence belongs to the eIF-3 subunit E family. Component of the eukaryotic translation initiation factor 3 (eIF-3) complex.

The protein localises to the cytoplasm. Component of the eukaryotic translation initiation factor 3 (eIF-3) complex, which is involved in protein synthesis of a specialized repertoire of mRNAs and, together with other initiation factors, stimulates binding of mRNA and methionyl-tRNAi to the 40S ribosome. The eIF-3 complex specifically targets and initiates translation of a subset of mRNAs involved in cell proliferation. The sequence is that of Eukaryotic translation initiation factor 3 subunit E (eIF3-S6) from Bombyx mori (Silk moth).